We begin with the raw amino-acid sequence, 76 residues long: Omega/Kappa-hexatoxin-Hv1h (76 aa).

The first 22 residues, 1-22 (MNTATGFIVLLVLATILGGIEA), serve as a signal peptide directing secretion. Residues 23–35 (GESHMRKDAMGRV) constitute a propeptide that is removed on maturation. 3 cysteine pairs are disulfide-bonded: Cys40–Cys55, Cys47–Cys60, and Cys54–Cys74.

The protein belongs to the neurotoxin 08 (Shiva) family. 02 (omega/kappa toxin) subfamily. In terms of tissue distribution, expressed by the venom gland.

The protein localises to the secreted. Functionally, toxin that may inhibit ion channels. The polypeptide is Omega/Kappa-hexatoxin-Hv1h (Hadronyche versuta (Blue mountains funnel-web spider)).